The following is a 237-amino-acid chain: Phosphoribosylaminoimidazole-succinocarboxamide synthase (237 aa).

The protein belongs to the SAICAR synthetase family.

It carries out the reaction 5-amino-1-(5-phospho-D-ribosyl)imidazole-4-carboxylate + L-aspartate + ATP = (2S)-2-[5-amino-1-(5-phospho-beta-D-ribosyl)imidazole-4-carboxamido]succinate + ADP + phosphate + 2 H(+). It functions in the pathway purine metabolism; IMP biosynthesis via de novo pathway; 5-amino-1-(5-phospho-D-ribosyl)imidazole-4-carboxamide from 5-amino-1-(5-phospho-D-ribosyl)imidazole-4-carboxylate: step 1/2. The polypeptide is Phosphoribosylaminoimidazole-succinocarboxamide synthase (Listeria monocytogenes serovar 1/2a (strain ATCC BAA-679 / EGD-e)).